The following is a 166-amino-acid chain: 2-amino-4-hydroxy-6-hydroxymethyldihydropteridine pyrophosphokinase (166 aa).

Belongs to the HPPK family.

It catalyses the reaction 6-hydroxymethyl-7,8-dihydropterin + ATP = (7,8-dihydropterin-6-yl)methyl diphosphate + AMP + H(+). The protein operates within cofactor biosynthesis; tetrahydrofolate biosynthesis; 2-amino-4-hydroxy-6-hydroxymethyl-7,8-dihydropteridine diphosphate from 7,8-dihydroneopterin triphosphate: step 4/4. Catalyzes the transfer of pyrophosphate from adenosine triphosphate (ATP) to 6-hydroxymethyl-7,8-dihydropterin, an enzymatic step in folate biosynthesis pathway. This chain is 2-amino-4-hydroxy-6-hydroxymethyldihydropteridine pyrophosphokinase (folK), found in Streptococcus pyogenes serotype M1.